Consider the following 362-residue polypeptide: Phosphoserine aminotransferase (362 aa).

Residue Arg-41 coordinates L-glutamate. Pyridoxal 5'-phosphate is bound by residues 75–76 (GS), Phe-101, Thr-152, Asp-173, and Gln-196. Position 197 is an N6-(pyridoxal phosphate)lysine (Lys-197). Pyridoxal 5'-phosphate is bound at residue 239–240 (NT).

This sequence belongs to the class-V pyridoxal-phosphate-dependent aminotransferase family. SerC subfamily. In terms of assembly, homodimer. Requires pyridoxal 5'-phosphate as cofactor.

It localises to the cytoplasm. It catalyses the reaction O-phospho-L-serine + 2-oxoglutarate = 3-phosphooxypyruvate + L-glutamate. The enzyme catalyses 4-(phosphooxy)-L-threonine + 2-oxoglutarate = (R)-3-hydroxy-2-oxo-4-phosphooxybutanoate + L-glutamate. It functions in the pathway amino-acid biosynthesis; L-serine biosynthesis; L-serine from 3-phospho-D-glycerate: step 2/3. Its function is as follows. Catalyzes the reversible conversion of 3-phosphohydroxypyruvate to phosphoserine and of 3-hydroxy-2-oxo-4-phosphonooxybutanoate to phosphohydroxythreonine. The sequence is that of Phosphoserine aminotransferase from Leuconostoc mesenteroides subsp. mesenteroides (strain ATCC 8293 / DSM 20343 / BCRC 11652 / CCM 1803 / JCM 6124 / NCDO 523 / NBRC 100496 / NCIMB 8023 / NCTC 12954 / NRRL B-1118 / 37Y).